The following is a 179-amino-acid chain: Large ribosomal subunit protein uL5 (179 aa).

Lys-3 carries the N6-acetyllysine modification.

Belongs to the universal ribosomal protein uL5 family. As to quaternary structure, part of the 50S ribosomal subunit; part of the 5S rRNA/L5/L18/L25 subcomplex. Contacts the 5S rRNA and the P site tRNA. Forms a bridge to the 30S subunit in the 70S ribosome.

In terms of biological role, this is one of the proteins that bind and probably mediate the attachment of the 5S RNA into the large ribosomal subunit, where it forms part of the central protuberance. In the 70S ribosome it contacts protein S13 of the 30S subunit (bridge B1b), connecting the 2 subunits; this bridge is implicated in subunit movement. Contacts the P site tRNA; the 5S rRNA and some of its associated proteins might help stabilize positioning of ribosome-bound tRNAs. This chain is Large ribosomal subunit protein uL5, found in Shigella flexneri.